Consider the following 159-residue polypeptide: Protein Smg homolog (159 aa).

This sequence belongs to the Smg family.

The chain is Protein Smg homolog from Dichelobacter nodosus (strain VCS1703A).